We begin with the raw amino-acid sequence, 209 residues long: uncharacterized protein (209 aa).

Residues 1-15 (MHRIDTKTAQKDKFG) show a composition bias toward basic and acidic residues. Residues 1–34 (MHRIDTKTAQKDKFGAGKNGFTRGNPQTGTPATD) form a disordered region. A compositionally biased stretch (polar residues) spans 22-31 (TRGNPQTGTP).

It to E.coli YfdL and M.jannaschii MJ0347.

This is an uncharacterized protein from Escherichia coli (strain K12).